A 513-amino-acid chain; its full sequence is GMP synthase [glutamine-hydrolyzing] (513 aa).

A Glutamine amidotransferase type-1 domain is found at 9–198; sequence LILVLDFGSQ…VRRVCDCKGQ (190 aa). The Nucleophile role is filled by C86. Residues H172 and E174 contribute to the active site. In terms of domain architecture, GMPS ATP-PPase spans 199–388; the sequence is WTMENFIEIE…LGIPEHLVWR (190 aa). 226–232 is an ATP binding site; it reads SGGVDSS.

As to quaternary structure, homodimer.

The enzyme catalyses XMP + L-glutamine + ATP + H2O = GMP + L-glutamate + AMP + diphosphate + 2 H(+). Its pathway is purine metabolism; GMP biosynthesis; GMP from XMP (L-Gln route): step 1/1. Catalyzes the synthesis of GMP from XMP. This chain is GMP synthase [glutamine-hydrolyzing], found in Staphylococcus aureus (strain Mu3 / ATCC 700698).